Reading from the N-terminus, the 692-residue chain is Putative ESX-1 scaffolding and assembly protein SaeA (692 aa).

The span at 1–21 shows a compositional bias: basic and acidic residues; it reads MGERGELVSDLHPSDDHDADP. 2 disordered regions span residues 1–23 and 87–134; these read MGER…DPRL and PAAP…TTGF. The span at 89–107 shows a compositional bias: pro residues; sequence APEPDPPPVPEPQPEPEPG.

It localises to the cytoplasm. Its function is as follows. May be involved in assembly of the ESX-1 / type VII specialized secretion system (T7SS), which exports several proteins including EsxA and EsxB. Involved in DNA conjugation in recipient (MKD8) but not donor (mc(2)155) strain. This is Putative ESX-1 scaffolding and assembly protein SaeA from Mycolicibacterium smegmatis (strain ATCC 700084 / mc(2)155) (Mycobacterium smegmatis).